A 238-amino-acid polypeptide reads, in one-letter code: Large ribosomal subunit protein uL5c (238 aa).

Belongs to the universal ribosomal protein uL5 family. Part of the 50S ribosomal subunit; contacts the 5S rRNA.

It is found in the plastid. Its subcellular location is the chloroplast. Its function is as follows. Binds 5S rRNA, forms part of the central protuberance of the 50S subunit. In Phaeodactylum tricornutum (strain CCAP 1055/1), this protein is Large ribosomal subunit protein uL5c (rpl5).